The primary structure comprises 280 residues: NAD(+) hydrolase TirS (280 aa).

Residues 22-94 (MNKLPDEIDR…KINLQKEQSR (73 aa)) are a coiled coil. Residues 141–275 (IEYDVFLSHS…EIVEKIYQVI (135 aa)) form the TIR domain. Residues 150-151 (SS) and E180 each bind NAD(+). Residue E216 is part of the active site.

Its subcellular location is the secreted. It catalyses the reaction NAD(+) + H2O = ADP-D-ribose + nicotinamide + H(+). The catalysed reaction is NADP(+) + H2O = ADP-D-ribose 2'-phosphate + nicotinamide + H(+). Functionally, virulence factor that suppresses host Toll-like receptor 2 (TLR2)-mediated NF-kappa-B signaling upon infection. NAD(+) hydrolase (NADase) that catalyzes cleavage of NAD(+) into ADP-D-ribose (ADPR) and nicotinamide. Also able to hydrolyze NADP(+), but not other NAD(+)-related molecules. Able to reduce NAD(+) levels in host cells. The polypeptide is NAD(+) hydrolase TirS (Staphylococcus aureus (strain MSSA476)).